Here is a 766-residue protein sequence, read N- to C-terminus: BMP/retinoic acid-inducible neural-specific protein 3 (766 aa).

The signal sequence occupies residues Met-1–Ala-33. The MACPF domain maps to Arg-74–Ala-264. Asn-168, Asn-337, Asn-456, Asn-562, Asn-609, and Asn-641 each carry an N-linked (GlcNAc...) asparagine glycan.

This sequence belongs to the BRINP family. In terms of tissue distribution, strongly expressed in oral keratinocytes compared to the weak expression in tongue squamous cell carcinoma (SCC). Expressed in endothelial and aortic smooth muscle cells. Overexpressed in gonadotropinomas compared to normal pituitarie tissues.

Its subcellular location is the secreted. It is found in the mitochondrion. Functionally, inhibits neuronal cell proliferation by negative regulation of the cell cycle transition. Promotes pituitary gonadotrope cell proliferation, migration and invasion, when overexpressed. May play a role in cell pituitary tumor development. The chain is BMP/retinoic acid-inducible neural-specific protein 3 (BRINP3) from Homo sapiens (Human).